Reading from the N-terminus, the 393-residue chain is Na(+)/H(+) antiporter NhaA (393 aa).

A run of 11 helical transmembrane segments spans residues A18 to W38, M65 to I85, M101 to I121, G131 to G151, V160 to F180, N184 to N204, A210 to I230, A260 to V280, I298 to I318, F334 to L354, and I369 to S389.

This sequence belongs to the NhaA Na(+)/H(+) (TC 2.A.33) antiporter family.

It localises to the cell inner membrane. It carries out the reaction Na(+)(in) + 2 H(+)(out) = Na(+)(out) + 2 H(+)(in). Its function is as follows. Na(+)/H(+) antiporter that extrudes sodium in exchange for external protons. The polypeptide is Na(+)/H(+) antiporter NhaA (Albidiferax ferrireducens (strain ATCC BAA-621 / DSM 15236 / T118) (Rhodoferax ferrireducens)).